The following is a 251-amino-acid chain: Triosephosphate isomerase (251 aa).

Substrate is bound by residues asparagine 10 and lysine 12. Histidine 96 acts as the Electrophile in catalysis. Glutamate 168 functions as the Proton acceptor in the catalytic mechanism.

The protein belongs to the triosephosphate isomerase family. Homodimer.

The catalysed reaction is D-glyceraldehyde 3-phosphate = dihydroxyacetone phosphate. It functions in the pathway carbohydrate biosynthesis; gluconeogenesis. It participates in carbohydrate degradation; glycolysis; D-glyceraldehyde 3-phosphate from glycerone phosphate: step 1/1. The polypeptide is Triosephosphate isomerase (tpiA) (Aspergillus oryzae (strain ATCC 42149 / RIB 40) (Yellow koji mold)).